A 420-amino-acid chain; its full sequence is Glucose-1-phosphate adenylyltransferase (420 aa).

Alpha-D-glucose 1-phosphate is bound by residues Tyr-107, Gly-172, 187–188, and Ser-205; that span reads EK.

Belongs to the bacterial/plant glucose-1-phosphate adenylyltransferase family. In terms of assembly, homotetramer.

The enzyme catalyses alpha-D-glucose 1-phosphate + ATP + H(+) = ADP-alpha-D-glucose + diphosphate. It participates in glycan biosynthesis; glycogen biosynthesis. In terms of biological role, involved in the biosynthesis of ADP-glucose, a building block required for the elongation reactions to produce glycogen. Catalyzes the reaction between ATP and alpha-D-glucose 1-phosphate (G1P) to produce pyrophosphate and ADP-Glc. The polypeptide is Glucose-1-phosphate adenylyltransferase (Rhizobium meliloti (strain 1021) (Ensifer meliloti)).